The primary structure comprises 403 residues: Argininosuccinate synthase (403 aa).

ATP contacts are provided by residues 12 to 20 (AYSGGLDTS) and alanine 39. L-citrulline is bound by residues tyrosine 91 and serine 96. Glycine 121 contributes to the ATP binding site. L-aspartate is bound by residues threonine 123, asparagine 127, and aspartate 128. Asparagine 127 is a binding site for L-citrulline. L-citrulline-binding residues include arginine 131, serine 180, serine 189, glutamate 265, and tyrosine 277.

The protein belongs to the argininosuccinate synthase family. Type 1 subfamily. In terms of assembly, homotetramer.

It is found in the cytoplasm. It catalyses the reaction L-citrulline + L-aspartate + ATP = 2-(N(omega)-L-arginino)succinate + AMP + diphosphate + H(+). It participates in amino-acid biosynthesis; L-arginine biosynthesis; L-arginine from L-ornithine and carbamoyl phosphate: step 2/3. In Vibrio vulnificus (strain CMCP6), this protein is Argininosuccinate synthase.